The chain runs to 241 residues: Methylthioribulose-1-phosphate dehydratase (241 aa).

Position 100 (cysteine 100) interacts with substrate. Histidine 117 and histidine 119 together coordinate Zn(2+). The active-site Proton donor/acceptor is glutamate 146. Histidine 202 is a Zn(2+) binding site.

It belongs to the aldolase class II family. MtnB subfamily. It depends on Zn(2+) as a cofactor.

It localises to the cytoplasm. The catalysed reaction is 5-(methylsulfanyl)-D-ribulose 1-phosphate = 5-methylsulfanyl-2,3-dioxopentyl phosphate + H2O. The protein operates within amino-acid biosynthesis; L-methionine biosynthesis via salvage pathway; L-methionine from S-methyl-5-thio-alpha-D-ribose 1-phosphate: step 2/6. Catalyzes the dehydration of methylthioribulose-1-phosphate (MTRu-1-P) into 2,3-diketo-5-methylthiopentyl-1-phosphate (DK-MTP-1-P). The sequence is that of Methylthioribulose-1-phosphate dehydratase from Ajellomyces dermatitidis (strain ER-3 / ATCC MYA-2586) (Blastomyces dermatitidis).